Here is a 259-residue protein sequence, read N- to C-terminus: (3R)-3-hydroxyacyl-CoA dehydrogenase (259 aa).

NAD(+) is bound by residues 13-21 and 40-41; these read LVTGAGSGI and DL. A Phosphoserine modification is found at Ser-58. The residue at position 66 (Lys-66) is an N6-acetyllysine. NAD(+) is bound at residue 72–74; that stretch reads ADV. A substrate-binding site is contributed by Ser-154. Residue Lys-158 is modified to N6-succinyllysine. Tyr-167 functions as the Proton acceptor in the catalytic mechanism. Residues 167–171 and 200–202 contribute to the NAD(+) site; these read YASSK and IAT. Lys-171 bears the N6-succinyllysine mark.

It belongs to the short-chain dehydrogenases/reductases (SDR) family. As to quaternary structure, heterotetramer with CBR4; contains two molecules of HSD17B8 and CBR4. As to expression, kidney, liver, testis, ovary and spleen. Oviduct, uterus, mammary gland, vagina, prostate, clitoral gland and moderately heart, dorsal skin, brain and lung.

It localises to the mitochondrion matrix. It catalyses the reaction a (3R)-3-hydroxyacyl-CoA + NAD(+) = a 3-oxoacyl-CoA + NADH + H(+). The enzyme catalyses 17beta-estradiol + NAD(+) = estrone + NADH + H(+). The catalysed reaction is testosterone + NAD(+) = androst-4-ene-3,17-dione + NADH + H(+). It carries out the reaction 17beta-hydroxy-5alpha-androstan-3-one + NAD(+) = 5alpha-androstan-3,17-dione + NADH + H(+). It participates in lipid metabolism; fatty acid biosynthesis. It functions in the pathway steroid biosynthesis; estrogen biosynthesis. Its pathway is lipid metabolism; mitochondrial fatty acid beta-oxidation. In terms of biological role, required for the solubility and assembly of the heterotetramer 3-ketoacyl-[acyl carrier protein] (ACP) reductase functional complex (KAR or KAR1) that forms part of the mitochondrial fatty acid synthase (mtFAS). Alpha-subunit of the KAR complex, acts as scaffold protein, required for the stability of carbonyl reductase type-4 (CBR4, beta-subunit of the KAR complex) and for its 3-ketoacyl-ACP reductase activity, thereby participating in mitochondrial fatty acid biosynthesis. Catalyzes the NAD-dependent conversion of (3R)-3-hydroxyacyl-CoA into 3-ketoacyl-CoA (3-oxoacyl-CoA) with no chain length preference, this enzymatic activity is not needed for the KAR function. Prefers (3R)-3-hydroxyacyl-CoA over (3S)-3-hydroxyacyl-CoA and displays enzymatic activity only in the presence of NAD(+)(H). Cooperates with enoyl-CoA hydratase 1 in mitochondria, together they constitute an alternative route to the auxiliary enzyme pathways for the breakdown of Z-PUFA (cis polyunsaturated fatty acid) enoyl-esters. NAD-dependent 17-beta-hydroxysteroid dehydrogenase with highest activity towards estradiol. It efficiently catalyzes the oxidation of estradiol (E2), testosterone, and dihydrotestosterone. Primarily an oxidative enzyme, it can switch to a reductive mode determined in the appropriate physiologic milieu and catalyze the reduction of estrone (E1) to form biologically active estradiol (E2). The chain is (3R)-3-hydroxyacyl-CoA dehydrogenase (Hsd17b8) from Mus musculus (Mouse).